A 282-amino-acid polypeptide reads, in one-letter code: Short-chain dehydrogenase/reductase prx7 (282 aa).

Residues Asn23, Asn70, Tyr150, Lys154, Val183, and Thr185 each contribute to the NADP(+) site. The active-site Proton acceptor is the Tyr150. Lys154 (lowers pKa of active site Tyr) is an active-site residue.

The protein belongs to the short-chain dehydrogenases/reductases (SDR) family.

It participates in sesquiterpene biosynthesis. In terms of biological role, short-chain dehydrogenase/reductase; part of the gene cluster that mediates the biosynthesis of PR-toxin, a bicyclic sesquiterpene belonging to the eremophilane class and acting as a mycotoxin. The first step of the pathway is catalyzed by the aristolochene synthase which performs the cyclization of trans,trans-farnesyl diphosphate (FPP) to the bicyclic sesquiterpene aristolochene. Following the formation of aristolochene, the non-oxygenated aristolochene is converted to the trioxygenated intermediate eremofortin B, via 7-epi-neopetasone. This conversion appears to involve three enzymes, a hydroxysterol oxidase-like enzyme, the quinone-oxidase prx3 that forms the quinone-type-structure in the bicyclic nucleus of aristolochene with the C8-oxo group and the C-3 hydroxyl group, and the P450 monooxygenase prx9 that introduces the epoxide at the double bond between carbons 1 and 2. No monoxy or dioxy-intermediates have been reported to be released to the broth, so these three early oxidative reactions may be coupled together. Eremofortin B is further oxidized by another P450 monooxygenase, that introduces a second epoxide between carbons 7 and 11 prior to acetylation to eremofortin A by the acetyltransferase prx11. The second epoxidation may be performed by a second P450 monooxygenase. After the acetylation step, eremofortin A is converted to eremofortin C and then to PR-toxin. First the conversion of eremofortin A to eremofortin C proceeds by oxidation of the side chain of the molecule at C-12 and is catalyzed by the short-chain oxidoreductase prx1. The cytochrome P450 monooxygenase prx8 also plays a role in this step. The primary alcohol formed at C-12 is finally oxidized by the short-chain alcohol dehydrogenase prx4 that forms PR-toxin. The sequence is that of Short-chain dehydrogenase/reductase prx7 from Penicillium rubens (strain ATCC 28089 / DSM 1075 / NRRL 1951 / Wisconsin 54-1255) (Penicillium chrysogenum).